We begin with the raw amino-acid sequence, 174 residues long: Large ribosomal subunit protein uL10 (174 aa).

It belongs to the universal ribosomal protein uL10 family. Part of the ribosomal stalk of the 50S ribosomal subunit. The N-terminus interacts with L11 and the large rRNA to form the base of the stalk. The C-terminus forms an elongated spine to which L12 dimers bind in a sequential fashion forming a multimeric L10(L12)X complex.

Forms part of the ribosomal stalk, playing a central role in the interaction of the ribosome with GTP-bound translation factors. This Anaeromyxobacter sp. (strain Fw109-5) protein is Large ribosomal subunit protein uL10.